Here is a 994-residue protein sequence, read N- to C-terminus: Probable beta-galactosidase C (994 aa).

Residues 1-19 (MKLQSILSCWAILVAQIWA) form the signal peptide. Position 78 (Tyr-78) interacts with substrate. N-linked (GlcNAc...) asparagine glycosylation occurs at Asn-88. 4 residues coordinate substrate: Asn-123, Ala-124, Glu-125, and Asn-183. Catalysis depends on Glu-184, which acts as the Proton donor. Tyr-247 is a binding site for substrate. Cys-253 and Cys-301 are oxidised to a cystine. A glycan (N-linked (GlcNAc...) asparagine) is linked at Asn-272. Residue Glu-283 is the Nucleophile of the active site. Substrate is bound at residue Tyr-350. Residues Asn-388, Asn-407, Asn-433, Asn-500, Asn-514, Asn-521, Asn-584, Asn-600, Asn-674, Asn-712, Asn-717, Asn-757, Asn-861, and Asn-969 are each glycosylated (N-linked (GlcNAc...) asparagine).

It belongs to the glycosyl hydrolase 35 family.

The protein resides in the secreted. It catalyses the reaction Hydrolysis of terminal non-reducing beta-D-galactose residues in beta-D-galactosides.. In terms of biological role, cleaves beta-linked terminal galactosyl residues from gangliosides, glycoproteins, and glycosaminoglycans. The chain is Probable beta-galactosidase C (lacC) from Aspergillus niger (strain ATCC MYA-4892 / CBS 513.88 / FGSC A1513).